Here is a 463-residue protein sequence, read N- to C-terminus: L-seryl-tRNA(Sec) selenium transferase (463 aa).

N6-(pyridoxal phosphate)lysine is present on K295.

This sequence belongs to the SelA family. In terms of assembly, homodecamer; pentamer of dimers. Binds only one seryl-tRNA(Sec) per dimer. Pyridoxal 5'-phosphate serves as cofactor.

It localises to the cytoplasm. The catalysed reaction is L-seryl-tRNA(Sec) + selenophosphate + H(+) = L-selenocysteinyl-tRNA(Sec) + phosphate. Its pathway is aminoacyl-tRNA biosynthesis; selenocysteinyl-tRNA(Sec) biosynthesis; selenocysteinyl-tRNA(Sec) from L-seryl-tRNA(Sec) (bacterial route): step 1/1. In terms of biological role, converts seryl-tRNA(Sec) to selenocysteinyl-tRNA(Sec) required for selenoprotein biosynthesis. In Salmonella paratyphi A (strain AKU_12601), this protein is L-seryl-tRNA(Sec) selenium transferase.